Consider the following 382-residue polypeptide: Succinate--CoA ligase [ADP-forming] subunit beta (382 aa).

An ATP-grasp domain is found at 9-240 (KELFAKYGVK…PRDITEFEAY (232 aa)). ATP contacts are provided by residues Lys45, 52–54 (GRG), Leu94, and Glu99. Asn193 and Asp207 together coordinate Mg(2+). Residues Asn260 and 317-319 (GIT) contribute to the substrate site.

This sequence belongs to the succinate/malate CoA ligase beta subunit family. Heterotetramer of two alpha and two beta subunits. Mg(2+) serves as cofactor.

The enzyme catalyses succinate + ATP + CoA = succinyl-CoA + ADP + phosphate. It carries out the reaction GTP + succinate + CoA = succinyl-CoA + GDP + phosphate. It participates in carbohydrate metabolism; tricarboxylic acid cycle; succinate from succinyl-CoA (ligase route): step 1/1. Its function is as follows. Succinyl-CoA synthetase functions in the citric acid cycle (TCA), coupling the hydrolysis of succinyl-CoA to the synthesis of either ATP or GTP and thus represents the only step of substrate-level phosphorylation in the TCA. The beta subunit provides nucleotide specificity of the enzyme and binds the substrate succinate, while the binding sites for coenzyme A and phosphate are found in the alpha subunit. This Pyrobaculum calidifontis (strain DSM 21063 / JCM 11548 / VA1) protein is Succinate--CoA ligase [ADP-forming] subunit beta.